A 114-amino-acid chain; its full sequence is Large ribosomal subunit protein bL19 (114 aa).

It belongs to the bacterial ribosomal protein bL19 family.

Functionally, this protein is located at the 30S-50S ribosomal subunit interface and may play a role in the structure and function of the aminoacyl-tRNA binding site. The sequence is that of Large ribosomal subunit protein bL19 from Bacillus cereus (strain AH187).